A 291-amino-acid polypeptide reads, in one-letter code: ATP synthase gamma chain (291 aa).

The protein belongs to the ATPase gamma chain family. F-type ATPases have 2 components, CF(1) - the catalytic core - and CF(0) - the membrane proton channel. CF(1) has five subunits: alpha(3), beta(3), gamma(1), delta(1), epsilon(1). CF(0) has three main subunits: a, b and c.

It localises to the cell membrane. Functionally, produces ATP from ADP in the presence of a proton gradient across the membrane. The gamma chain is believed to be important in regulating ATPase activity and the flow of protons through the CF(0) complex. In Streptococcus uberis (strain ATCC BAA-854 / 0140J), this protein is ATP synthase gamma chain.